Reading from the N-terminus, the 422-residue chain is L-threonine dehydratase biosynthetic IlvA (422 aa).

Lysine 56 is subject to N6-(pyridoxal phosphate)lysine. Residues asparagine 83, 189-193 (GGGGL), and serine 315 contribute to the pyridoxal 5'-phosphate site. One can recognise an ACT-like domain in the interval 339-413 (HYFILNFPQR…FDPSNIYINE (75 aa)).

It belongs to the serine/threonine dehydratase family. As to quaternary structure, homotetramer. Requires pyridoxal 5'-phosphate as cofactor.

It carries out the reaction L-threonine = 2-oxobutanoate + NH4(+). It functions in the pathway amino-acid biosynthesis; L-isoleucine biosynthesis; 2-oxobutanoate from L-threonine: step 1/1. Its function is as follows. Catalyzes the anaerobic formation of alpha-ketobutyrate and ammonia from threonine in a two-step reaction. The first step involved a dehydration of threonine and a production of enamine intermediates (aminocrotonate), which tautomerizes to its imine form (iminobutyrate). Both intermediates are unstable and short-lived. The second step is the nonenzymatic hydrolysis of the enamine/imine intermediates to form 2-ketobutyrate and free ammonia. In the low water environment of the cell, the second step is accelerated by RidA. This chain is L-threonine dehydratase biosynthetic IlvA (ilvA), found in Staphylococcus aureus (strain Mu50 / ATCC 700699).